A 633-amino-acid chain; its full sequence is Chaperone protein DnaK (633 aa).

Threonine 198 is subject to Phosphothreonine; by autocatalysis. Positions 599–633 (QQASQETPGDGDAGAAGAKKKDDDDVVDADYEEVK) are disordered. The span at 622–633 (DDVVDADYEEVK) shows a compositional bias: acidic residues.

This sequence belongs to the heat shock protein 70 family.

Acts as a chaperone. This is Chaperone protein DnaK from Desulfotalea psychrophila (strain LSv54 / DSM 12343).